A 315-amino-acid chain; its full sequence is Homoserine kinase (315 aa).

ATP is bound at residue 97–107; sequence PPARGLGSSAT.

Belongs to the GHMP kinase family. Homoserine kinase subfamily.

The protein resides in the cytoplasm. It carries out the reaction L-homoserine + ATP = O-phospho-L-homoserine + ADP + H(+). Its pathway is amino-acid biosynthesis; L-threonine biosynthesis; L-threonine from L-aspartate: step 4/5. In terms of biological role, catalyzes the ATP-dependent phosphorylation of L-homoserine to L-homoserine phosphate. This chain is Homoserine kinase, found in Parasynechococcus marenigrum (strain WH8102).